Here is a 700-residue protein sequence, read N- to C-terminus: Kin of IRRE-like protein 2 (700 aa).

The first 19 residues, 1–19 (MLASALLVFLCCFKGHAGS), serve as a signal peptide directing secretion. Topologically, residues 20 to 507 (SPHFLQQPED…GRRDLLPTVR (488 aa)) are extracellular. Ig-like C2-type domains follow at residues 21 to 115 (PHFL…AQLH), 120 to 219 (PEAP…VTLS), 224 to 304 (PMVT…TALE), 309 to 391 (PILQ…ARLT), and 395 to 497 (PPVV…QIHL). Cys42 and Cys100 are oxidised to a cystine. Asn140 carries N-linked (GlcNAc...) asparagine glycosylation. Disulfide bonds link Cys143/Cys201 and Cys245/Cys288. The Cell attachment site signature appears at 146–148 (RGD). N-linked (GlcNAc...) asparagine glycosylation is present at Asn298. Intrachain disulfides connect Cys330–Cys372 and Cys416–Cys482. Residue Asn481 is glycosylated (N-linked (GlcNAc...) asparagine). The chain crosses the membrane as a helical span at residues 508–528 (IVAGAASAATSLLMVITGVVL). At 529-700 (CCWRHGSLSK…PSHQRLQTHV (172 aa)) the chain is on the cytoplasmic side. Positions 542–576 (LVRIPGSSEGSSSRGPEEETGSSEDRGPIVHTDHS) are disordered. The residue at position 563 (Ser563) is a Phosphoserine. A compositionally biased stretch (basic and acidic residues) spans 564-576 (SEDRGPIVHTDHS). Phosphotyrosine occurs at positions 595, 596, and 653. The interval 671–700 (FGPPELSSGTPPFPYATLSPPSHQRLQTHV) is disordered. The span at 689-700 (SPPSHQRLQTHV) shows a compositional bias: polar residues.

The protein belongs to the immunoglobulin superfamily. Homodimer. Interacts with NPHS2/podocin (via the C-terminus). Interacts with NPHS1 (via the Ig-like domains). Interacts with FYN. In terms of processing, N-glycosylated. Post-translationally, phosphorylated at Ser-548 or Ser-549; due to site ambiguity, the exact position of the serine phosphorylation could not be determined. Phosphorylation at residues Tyr-631 and/or Tyr-632. FYN mediates tyrosine phosphorylation in pancreatic beta-cells. The extracellular domain is cleaved leading to the generation of a soluble fragment and a membrane-bound C-terminal fragment, which is further cleaved by gamma-secretase. As to expression, highly expressed in beta-cells of the pancreatic islets. Expression is seen in podocytes of kidney glomeruli, and in the cerebellum and hindbrain at 12.5 dpc, in the spinal cord at 10.5 dpc, and in retina and hypothalamus at 13.5 dpc.

The protein resides in the cell membrane. In terms of biological role, may regulate basal insulin secretion. This Mus musculus (Mouse) protein is Kin of IRRE-like protein 2 (Kirrel2).